The sequence spans 363 residues: MVVSFLKELLNFRSITPDDAGSLEFIAKFLPDFEAKFIEKNGTKNLILSKIYGDGEHLAFAGHVDVVPPGDGWDSEPFTPLEKDGYIYARGSQDMKSGVAAFVCAAKEAKFEGKLSLILTSDEEGDGTYGTPLALEYLREIRDLPKFCVVAEPTCDKKFGDSIKVGRRGSINGKIVIKGVQGHVAYPEKCINPVNLIAPLLSKIADHDMDGGSEFFSPSKIVVTDIRGGMQVCNVTPSELSIMFNVRNSNLTDVNDVESYLRSVLDGLSYELSIKQSSKRFLTNKDSKIVRNLMASVTKITGVTPLLNTKGGTSDARHFAEFGVDAIEFGVINDRIHAKNERVSISEVNKLYEVFKDLIENFY.

His-63 lines the Zn(2+) pocket. Residue Asp-65 is part of the active site. Asp-94 provides a ligand contact to Zn(2+). Catalysis depends on Glu-123, which acts as the Proton acceptor. 3 residues coordinate Zn(2+): Glu-124, Glu-152, and His-337.

It belongs to the peptidase M20A family. DapE subfamily. Homodimer. Zn(2+) is required as a cofactor. Co(2+) serves as cofactor.

The catalysed reaction is N-succinyl-(2S,6S)-2,6-diaminopimelate + H2O = (2S,6S)-2,6-diaminopimelate + succinate. The protein operates within amino-acid biosynthesis; L-lysine biosynthesis via DAP pathway; LL-2,6-diaminopimelate from (S)-tetrahydrodipicolinate (succinylase route): step 3/3. Functionally, catalyzes the hydrolysis of N-succinyl-L,L-diaminopimelic acid (SDAP), forming succinate and LL-2,6-diaminopimelate (DAP), an intermediate involved in the bacterial biosynthesis of lysine and meso-diaminopimelic acid, an essential component of bacterial cell walls. The chain is Succinyl-diaminopimelate desuccinylase from Campylobacter concisus (strain 13826).